A 24-amino-acid chain; its full sequence is Brevinin-1Ba (24 aa).

A disulfide bridge links C18 with C24.

In terms of tissue distribution, expressed by the skin glands.

It is found in the secreted. In terms of biological role, antibacterial activity against Gram-positive bacterium S.aureus. This Lithobates berlandieri (Rio Grande leopard frog) protein is Brevinin-1Ba.